We begin with the raw amino-acid sequence, 61 residues long: Metallothionein-1E (61 aa).

Position 1 is an N-acetylmethionine (methionine 1). A beta region spans residues methionine 1–cysteine 29. A divalent metal cation-binding residues include cysteine 5, cysteine 7, cysteine 13, cysteine 15, cysteine 19, cysteine 21, cysteine 24, cysteine 26, cysteine 29, cysteine 33, cysteine 34, cysteine 36, cysteine 37, cysteine 41, cysteine 44, cysteine 48, cysteine 50, cysteine 57, cysteine 59, and cysteine 60. The interval lysine 30 to alanine 61 is alpha.

The protein belongs to the metallothionein superfamily. Type 1 family. In terms of assembly, monomer.

Its function is as follows. Metallothioneins have a high content of cysteine residues that bind various heavy metals; these proteins are transcriptionally regulated by both heavy metals and glucocorticoids. The sequence is that of Metallothionein-1E (MT1E) from Homo sapiens (Human).